We begin with the raw amino-acid sequence, 347 residues long: Protein PET130 (347 aa).

It localises to the mitochondrion matrix. The sequence is that of Protein PET130 (PET130) from Saccharomyces cerevisiae (strain ATCC 204508 / S288c) (Baker's yeast).